Reading from the N-terminus, the 322-residue chain is Phosphatidylglycerol--prolipoprotein diacylglyceryl transferase (322 aa).

3 helical membrane passes run 23–43 (VYPI…AFFW), 53–73 (FFAL…LWFV), and 97–117 (GLSI…YIYF). R143 contributes to the a 1,2-diacyl-sn-glycero-3-phospho-(1'-sn-glycerol) binding site. Helical transmembrane passes span 191–211 (PLFL…VWII) and 250–270 (LAAM…EIWA).

This sequence belongs to the Lgt family.

The protein resides in the cell membrane. The enzyme catalyses L-cysteinyl-[prolipoprotein] + a 1,2-diacyl-sn-glycero-3-phospho-(1'-sn-glycerol) = an S-1,2-diacyl-sn-glyceryl-L-cysteinyl-[prolipoprotein] + sn-glycerol 1-phosphate + H(+). It participates in protein modification; lipoprotein biosynthesis (diacylglyceryl transfer). Catalyzes the transfer of the diacylglyceryl group from phosphatidylglycerol to the sulfhydryl group of the N-terminal cysteine of a prolipoprotein, the first step in the formation of mature lipoproteins. The chain is Phosphatidylglycerol--prolipoprotein diacylglyceryl transferase from Mycoplasmopsis pulmonis (strain UAB CTIP) (Mycoplasma pulmonis).